The sequence spans 393 residues: Acetylornithine aminotransferase (393 aa).

Residues 105 to 106 and Phe138 contribute to the pyridoxal 5'-phosphate site; that span reads GA. Arg141 contributes to the N(2)-acetyl-L-ornithine binding site. A pyridoxal 5'-phosphate-binding site is contributed by 224-227; the sequence is DEVQ. Position 253 is an N6-(pyridoxal phosphate)lysine (Lys253). Ser281 is a N(2)-acetyl-L-ornithine binding site. Pyridoxal 5'-phosphate is bound at residue Thr282.

The protein belongs to the class-III pyridoxal-phosphate-dependent aminotransferase family. ArgD subfamily. In terms of assembly, homodimer. Requires pyridoxal 5'-phosphate as cofactor.

It is found in the cytoplasm. The enzyme catalyses N(2)-acetyl-L-ornithine + 2-oxoglutarate = N-acetyl-L-glutamate 5-semialdehyde + L-glutamate. Its pathway is amino-acid biosynthesis; L-arginine biosynthesis; N(2)-acetyl-L-ornithine from L-glutamate: step 4/4. In Haemophilus ducreyi (strain 35000HP / ATCC 700724), this protein is Acetylornithine aminotransferase.